Reading from the N-terminus, the 278-residue chain is HTH-type transcriptional activator RhaS (278 aa).

Residues 174 to 272 (NLLLAWLEDH…NWSPRDIRQG (99 aa)) enclose the HTH araC/xylS-type domain. 2 consecutive DNA-binding regions (H-T-H motif) follow at residues 191-212 (DAVA…KQQT) and 239-262 (VTDI…RREF).

As to quaternary structure, binds DNA as a dimer.

It is found in the cytoplasm. Its function is as follows. Activates expression of the rhaBAD and rhaT operons. This is HTH-type transcriptional activator RhaS from Escherichia coli (strain SMS-3-5 / SECEC).